The primary structure comprises 924 residues: Alpha-actinin, sarcomeric (924 aa).

An actin-binding region spans residues 1-250 (MMMENGLSME…IMTYVSCYYH (250 aa)). Calponin-homology (CH) domains follow at residues 34–138 (KQQK…LRFA) and 147–253 (MTAK…HAFQ). Spectrin repeat units follow at residues 251–395 (AFQG…TVSD), 396–510 (ISNS…RCQR), 511–631 (ICDQ…TAND), and 632–744 (MTRK…TMET). 2 consecutive EF-hand domains span residues 778–813 (EQLNEFRSSFNHFDKNRTGRLSPEEFKSCLVSLGYS) and 819–854 (QGDLDFQRILAVVDPNNTGYVHFDAFLDFMTRESTD). Residues Asp-791, Asn-793, Thr-795, Arg-797, and Glu-802 each coordinate Ca(2+).

It belongs to the alpha-actinin family. Homodimer; antiparallel. Interacts with Smn; the interaction occurs in adult thoracic tissues. In terms of tissue distribution, larval muscle isoform is expressed in the larval body wall, adult muscles of the head and abdomen and supercontractile muscles of the larva and adult. Adult muscle isoform accumulates within adult fibrillar and tubular muscles.

The protein resides in the cytoplasm. It localises to the myofibril. Its subcellular location is the sarcomere. The protein localises to the z line. Functionally, F-actin cross-linking protein which is thought to anchor actin to a variety of intracellular structures. This is a bundling protein. In Drosophila melanogaster (Fruit fly), this protein is Alpha-actinin, sarcomeric (Actn).